Reading from the N-terminus, the 193-residue chain is Peptide deformylase 2 (193 aa).

Fe cation-binding residues include Cys100 and His142. The active site involves Glu143. Residue His146 participates in Fe cation binding.

Belongs to the polypeptide deformylase family. Fe(2+) is required as a cofactor.

It catalyses the reaction N-terminal N-formyl-L-methionyl-[peptide] + H2O = N-terminal L-methionyl-[peptide] + formate. Removes the formyl group from the N-terminal Met of newly synthesized proteins. Requires at least a dipeptide for an efficient rate of reaction. N-terminal L-methionine is a prerequisite for activity but the enzyme has broad specificity at other positions. This Corynebacterium efficiens (strain DSM 44549 / YS-314 / AJ 12310 / JCM 11189 / NBRC 100395) protein is Peptide deformylase 2.